The following is a 367-amino-acid chain: Leucine-rich repeat-containing protein 28 (367 aa).

LRR repeat units follow at residues 16-36 (KHKNLFLNYRNLHHFPLELLK), 42-63 (YLERLYMKRNSLTSLPENLAQK), 66-87 (NLVELYLHSNNIVVVPEAIGSL), 89-110 (KLQCLDLSDNALEIVCPEIGRL), 112-133 (ALRHLRLANNQLQFLPPEVGDL), 135-156 (ELQTLDISTNRLLTLPERLHMC), 158-180 (SLQYLTVDRNRLWYVPRHLCQLP), 181-202 (SLNELSMAGNRLAFLPLDLGRS), and 204-226 (ELQYVYVDNNIHLKGLPSYLYNK).

This chain is Leucine-rich repeat-containing protein 28 (LRRC28), found in Homo sapiens (Human).